Reading from the N-terminus, the 185-residue chain is Large ribosomal subunit protein uL5 (185 aa).

The protein belongs to the universal ribosomal protein uL5 family. In terms of assembly, part of the 50S ribosomal subunit; part of the 5S rRNA/L5/L18/L25 subcomplex. Contacts the 5S rRNA and the P site tRNA. Forms a bridge to the 30S subunit in the 70S ribosome.

Functionally, this is one of the proteins that bind and probably mediate the attachment of the 5S RNA into the large ribosomal subunit, where it forms part of the central protuberance. In the 70S ribosome it contacts protein S13 of the 30S subunit (bridge B1b), connecting the 2 subunits; this bridge is implicated in subunit movement. Contacts the P site tRNA; the 5S rRNA and some of its associated proteins might help stabilize positioning of ribosome-bound tRNAs. The sequence is that of Large ribosomal subunit protein uL5 from Sinorhizobium medicae (strain WSM419) (Ensifer medicae).